Reading from the N-terminus, the 638-residue chain is Nitrous-oxide reductase (638 aa).

The tat-type signal signal peptide spans 1–52 (MSDKDSKNTPQVPEKLGLSRRGFLGASAVTGAAVAATALGGAVMTRESWAQA). Residues H129, H130, and H178 each coordinate Cu cation. Residues Y256, E259, M267, D273, and N324 each contribute to the Ca(2+) site. Cu cation is bound by residues H326, H382, and H433. Positions 454 and 469 each coordinate Ca(2+). H494, H583, C618, W620, C622, H626, and M629 together coordinate Cu cation. The segment at 542–638 (NKVRVYMTSM…MVGRMMVEPA (97 aa)) is COX2-like.

It belongs to the NosZ family. The protein in the C-terminal section; belongs to the cytochrome c oxidase subunit 2 family. Homodimer. It depends on Ca(2+) as a cofactor. Cu cation serves as cofactor. Post-translationally, predicted to be exported by the Tat system. The position of the signal peptide cleavage has not been experimentally proven. The N-terminus is blocked.

It localises to the periplasm. It catalyses the reaction N2 + 2 Fe(III)-[cytochrome c] + H2O = nitrous oxide + 2 Fe(II)-[cytochrome c] + 2 H(+). It functions in the pathway nitrogen metabolism; nitrate reduction (denitrification); dinitrogen from nitrate: step 4/4. Functionally, nitrous-oxide reductase is part of a bacterial respiratory system which is activated under anaerobic conditions in the presence of nitrate or nitrous oxide. In Stutzerimonas stutzeri (Pseudomonas stutzeri), this protein is Nitrous-oxide reductase (nosZ).